Consider the following 245-residue polypeptide: High affinity immunoglobulin epsilon receptor subunit alpha (245 aa).

The signal sequence occupies residues 1 to 23; sequence MDTGGSARLCLALVLISLGVMLT. At 24 to 204 the chain is on the extracellular side; it reads ATQKSVVSLD…DYTIEYRWLQ (181 aa). 2 Ig-like domains span residues 28-103 and 113-181; these read SVVS…KPVY and LQSS…LNKV. The cysteines at positions 49 and 91 are disulfide-linked. N-linked (GlcNAc...) asparagine glycans are attached at residues N52, N53, N58, N65, N123, N158, and N167. C130 and C174 are oxidised to a cystine. The chain crosses the membrane as a helical span at residues 205-223; it reads LIFPSLAVILFAVDTGLWF. The Cytoplasmic segment spans residues 224–245; that stretch reads STHKQFESILKIQKTGKGKKKG.

As to quaternary structure, tetramer of an alpha chain, a beta chain, and two disulfide linked gamma chains. Interacts with IGHE (via CH3 region). In terms of tissue distribution, expressed in leukocytes and pinealocytes at night (at protein level).

It localises to the cell membrane. The protein resides in the secreted. Its function is as follows. High-affinity receptor for immunoglobulin epsilon/IgE. Mediates IgE effector functions in myeloid cells. Upon IgE binding and antigen/allergen cross-linking initiates signaling pathways that lead to myeloid cell activation and differentiation. On mast cells, basophils and eosinophils stimulates the secretion of vasoactive amines, lipid mediators and cytokines that contribute to inflammatory response, tissue remodeling and cytotoxicity against microbes. Triggers the immediate hypersensitivity response to allergens as a host defense mechanism against helminth parasites, pathogenic bacteria and venom toxicity. When dysregulated, it can elicit harmful life-threatening allergic and anaphylactic reactions. This chain is High affinity immunoglobulin epsilon receptor subunit alpha (Fcer1a), found in Rattus norvegicus (Rat).